An 88-amino-acid chain; its full sequence is Small ribosomal subunit protein bS20 (88 aa).

It belongs to the bacterial ribosomal protein bS20 family.

Functionally, binds directly to 16S ribosomal RNA. The chain is Small ribosomal subunit protein bS20 from Bradyrhizobium diazoefficiens (strain JCM 10833 / BCRC 13528 / IAM 13628 / NBRC 14792 / USDA 110).